The chain runs to 300 residues: Jacalin-related lectin 32 (300 aa).

Position 2 is an N-acetylalanine (alanine 2). 2 Jacalin-type lectin domains span residues 2-146 and 154-297; these read AQKV…YFTT and AKKL…HILP.

It belongs to the jacalin lectin family.

Functionally, involved in gametophytic development. The chain is Jacalin-related lectin 32 (JAL32) from Arabidopsis thaliana (Mouse-ear cress).